The primary structure comprises 316 residues: ATP synthase gamma chain (316 aa).

Belongs to the ATPase gamma chain family. As to quaternary structure, F-type ATPases have 2 components, CF(1) - the catalytic core - and CF(0) - the membrane proton channel. CF(1) has five subunits: alpha(3), beta(3), gamma(1), delta(1), epsilon(1). CF(0) has three main subunits: a, b and c.

The protein resides in the cellular thylakoid membrane. Functionally, produces ATP from ADP in the presence of a proton gradient across the membrane. The gamma chain is believed to be important in regulating ATPase activity and the flow of protons through the CF(0) complex. This Prochlorococcus marinus (strain MIT 9301) protein is ATP synthase gamma chain.